A 186-amino-acid polypeptide reads, in one-letter code: Putative 3-methyladenine DNA glycosylase (186 aa).

This sequence belongs to the DNA glycosylase MPG family.

This Borreliella afzelii (strain PKo) (Borrelia afzelii) protein is Putative 3-methyladenine DNA glycosylase.